The sequence spans 158 residues: Transcription elongation factor GreA (158 aa).

Residues 4-75 (QKQYPMTQEG…QRVENMLRNA (72 aa)) are a coiled coil.

This sequence belongs to the GreA/GreB family.

In terms of biological role, necessary for efficient RNA polymerase transcription elongation past template-encoded arresting sites. The arresting sites in DNA have the property of trapping a certain fraction of elongating RNA polymerases that pass through, resulting in locked ternary complexes. Cleavage of the nascent transcript by cleavage factors such as GreA or GreB allows the resumption of elongation from the new 3'terminus. GreA releases sequences of 2 to 3 nucleotides. The sequence is that of Transcription elongation factor GreA from Staphylococcus saprophyticus subsp. saprophyticus (strain ATCC 15305 / DSM 20229 / NCIMB 8711 / NCTC 7292 / S-41).